A 139-amino-acid polypeptide reads, in one-letter code: Putative nickel-responsive regulator (139 aa).

Positions 79, 90, 92, and 98 each coordinate Ni(2+).

Belongs to the transcriptional regulatory CopG/NikR family. Requires Ni(2+) as cofactor.

In terms of biological role, transcriptional regulator. The sequence is that of Putative nickel-responsive regulator from Pelobacter propionicus (strain DSM 2379 / NBRC 103807 / OttBd1).